The following is a 314-amino-acid chain: A-kinase anchor protein 7 isoform gamma (314 aa).

The disordered stretch occupies residues Met-1–Lys-46. Positions Arg-24–Asp-37 are enriched in basic and acidic residues. AMP-binding positions include Thr-95 and His-185–Thr-187. CMP-binding positions include Thr-95 and His-185–Thr-187. A PKA-RII-alpha subunit binding domain region spans residues Ala-260–Lys-314. The RI-alpha-binding stretch occupies residues Glu-261–Thr-285. Residues Leu-262–Leu-275 form an RII-binding region. The disordered stretch occupies residues Tyr-281–Lys-314. Positions Lys-298–Lys-314 are enriched in basic and acidic residues.

Binds cAMP-dependent protein kinase (PKA). Interacts with PRKCA; only the cytoplasmic form is capable of interacting with PRKCA. Expressed in oocytes.

Its subcellular location is the nucleus. It is found in the cytoplasm. Probably targets cAMP-dependent protein kinase (PKA) to the cellular membrane or cytoskeletal structures. The membrane-associated form reduces epithelial sodium channel (ENaC) activity, whereas the free cytoplasmic form may negatively regulate ENaC channel feedback inhibition by intracellular sodium. The chain is A-kinase anchor protein 7 isoform gamma from Mus musculus (Mouse).